The sequence spans 107 residues: SH3 domain-binding glutamic acid-rich-like protein 2 (107 aa).

Positions 61 to 67 match the SH3-binding motif; it reads QGNPLPP.

Belongs to the SH3BGR family.

The protein resides in the nucleus. This chain is SH3 domain-binding glutamic acid-rich-like protein 2 (SH3BGRL2), found in Bos taurus (Bovine).